We begin with the raw amino-acid sequence, 814 residues long: Valine--tRNA ligase (814 aa).

The 'HIGH' region motif lies at 46–56 (PTVSGQLHIGH). Residues 536–540 (KMSKS) carry the 'KMSKS' region motif. Position 539 (lysine 539) interacts with ATP.

Belongs to the class-I aminoacyl-tRNA synthetase family. ValS type 2 subfamily. As to quaternary structure, monomer.

Its subcellular location is the cytoplasm. The enzyme catalyses tRNA(Val) + L-valine + ATP = L-valyl-tRNA(Val) + AMP + diphosphate. Catalyzes the attachment of valine to tRNA(Val). As ValRS can inadvertently accommodate and process structurally similar amino acids such as threonine, to avoid such errors, it has a 'posttransfer' editing activity that hydrolyzes mischarged Thr-tRNA(Val) in a tRNA-dependent manner. The chain is Valine--tRNA ligase from Rickettsia prowazekii (strain Madrid E).